We begin with the raw amino-acid sequence, 480 residues long: tRNA-2-methylthio-N(6)-dimethylallyladenosine synthase (480 aa).

Residues 43–161 enclose the MTTase N-terminal domain; it reads KLYCLNTFGC…FPELLYSAMD (119 aa). [4Fe-4S] cluster is bound by residues Cys-52, Cys-88, Cys-122, Cys-198, Cys-202, and Cys-205. A Radical SAM core domain is found at 184–414; it reads RKDGVKAWVT…LETQNRISKE (231 aa). The TRAM domain occupies 417 to 480; sequence DTFLGKVVEV…TWSLEGSIVR (64 aa).

The protein belongs to the methylthiotransferase family. MiaB subfamily. In terms of assembly, monomer. [4Fe-4S] cluster is required as a cofactor.

It localises to the cytoplasm. It carries out the reaction N(6)-dimethylallyladenosine(37) in tRNA + (sulfur carrier)-SH + AH2 + 2 S-adenosyl-L-methionine = 2-methylsulfanyl-N(6)-dimethylallyladenosine(37) in tRNA + (sulfur carrier)-H + 5'-deoxyadenosine + L-methionine + A + S-adenosyl-L-homocysteine + 2 H(+). Functionally, catalyzes the methylthiolation of N6-(dimethylallyl)adenosine (i(6)A), leading to the formation of 2-methylthio-N6-(dimethylallyl)adenosine (ms(2)i(6)A) at position 37 in tRNAs that read codons beginning with uridine. In Acetivibrio thermocellus (strain ATCC 27405 / DSM 1237 / JCM 9322 / NBRC 103400 / NCIMB 10682 / NRRL B-4536 / VPI 7372) (Clostridium thermocellum), this protein is tRNA-2-methylthio-N(6)-dimethylallyladenosine synthase.